A 192-amino-acid chain; its full sequence is dTTP/UTP pyrophosphatase (192 aa).

Aspartate 70 serves as the catalytic Proton acceptor.

Belongs to the Maf family. YhdE subfamily. A divalent metal cation serves as cofactor.

Its subcellular location is the cytoplasm. The catalysed reaction is dTTP + H2O = dTMP + diphosphate + H(+). It catalyses the reaction UTP + H2O = UMP + diphosphate + H(+). Nucleoside triphosphate pyrophosphatase that hydrolyzes dTTP and UTP. May have a dual role in cell division arrest and in preventing the incorporation of modified nucleotides into cellular nucleic acids. The polypeptide is dTTP/UTP pyrophosphatase (Alkaliphilus metalliredigens (strain QYMF)).